The primary structure comprises 274 residues: Formamidopyrimidine-DNA glycosylase (274 aa).

Residue Pro-2 is the Schiff-base intermediate with DNA of the active site. The Proton donor role is filled by Glu-3. The Proton donor; for beta-elimination activity role is filled by Lys-57. Residues His-90, Arg-109, and Lys-150 each coordinate DNA. The FPG-type zinc finger occupies 235 to 269 (FVYGRKDKACLICGHTIESIKQGQRSTFFCRHCQH). Residue Arg-259 is the Proton donor; for delta-elimination activity of the active site.

This sequence belongs to the FPG family. In terms of assembly, monomer. Requires Zn(2+) as cofactor.

The enzyme catalyses Hydrolysis of DNA containing ring-opened 7-methylguanine residues, releasing 2,6-diamino-4-hydroxy-5-(N-methyl)formamidopyrimidine.. It carries out the reaction 2'-deoxyribonucleotide-(2'-deoxyribose 5'-phosphate)-2'-deoxyribonucleotide-DNA = a 3'-end 2'-deoxyribonucleotide-(2,3-dehydro-2,3-deoxyribose 5'-phosphate)-DNA + a 5'-end 5'-phospho-2'-deoxyribonucleoside-DNA + H(+). Involved in base excision repair of DNA damaged by oxidation or by mutagenic agents. Acts as a DNA glycosylase that recognizes and removes damaged bases. Has a preference for oxidized purines, such as 7,8-dihydro-8-oxoguanine (8-oxoG). Has AP (apurinic/apyrimidinic) lyase activity and introduces nicks in the DNA strand. Cleaves the DNA backbone by beta-delta elimination to generate a single-strand break at the site of the removed base with both 3'- and 5'-phosphates. The polypeptide is Formamidopyrimidine-DNA glycosylase (Proteus mirabilis (strain HI4320)).